Consider the following 305-residue polypeptide: Non-homologous end joining protein Ku (305 aa).

A Ku domain is found at 16 to 202 (SLVSFGISLI…KVDPEQLSLA (187 aa)). Residues 263–305 (GEENGRKKSVSGAQHRSRRKSKGEQKLKVVRSGSSSDKRRKSA) form a disordered region.

It belongs to the prokaryotic Ku family. In terms of assembly, homodimer. Interacts with LigD.

With LigD forms a non-homologous end joining (NHEJ) DNA repair enzyme, which repairs dsDNA breaks with reduced fidelity. Binds linear dsDNA with 5'- and 3'- overhangs but not closed circular dsDNA nor ssDNA. Recruits and stimulates the ligase activity of LigD. The polypeptide is Non-homologous end joining protein Ku (Acidobacterium capsulatum (strain ATCC 51196 / DSM 11244 / BCRC 80197 / JCM 7670 / NBRC 15755 / NCIMB 13165 / 161)).